A 379-amino-acid chain; its full sequence is MDLKPRVIRSEDIYRTYWLYWHLLGLESNFFLNRLLDLVITIFVTIWYPIHLILGLFMERSLGDVCKGLPITAACFFASFKFICFRFKLSEIKEIEILFKELDQRALSREECEFFNQNTRREANFIWKSFIVAYGLSNISAIASVLFGGGHKLLYPAWFPYDVQATELIFWLSVTYQIAGVSLAILQNLANDSYPPMTFCVVAGHVRLLAMRLSRIGQGPEETIYLTGKQLIESIEDHRKLMKIVELLRSTMNISQLGQFISSGVNISITLVNILFFADNNFAITYYGVYFLSMVLELFPCCYYGTLISVEMNQLTYAIYSSNWMSMNRSYSRILLIFMQLTLAEVQIKAGGMIGIGMNAFFATVRLAYSFFTLAMSLR.

Topologically, residues 1-37 (MDLKPRVIRSEDIYRTYWLYWHLLGLESNFFLNRLLD) are cytoplasmic. A helical transmembrane segment spans residues 38–58 (LVITIFVTIWYPIHLILGLFM). Topologically, residues 59–64 (ERSLGD) are extracellular. Residues 65 to 85 (VCKGLPITAACFFASFKFICF) form a helical membrane-spanning segment. Residues 86 to 129 (RFKLSEIKEIEILFKELDQRALSREECEFFNQNTRREANFIWKS) lie on the Cytoplasmic side of the membrane. A helical membrane pass occupies residues 130 to 150 (FIVAYGLSNISAIASVLFGGG). Residues 151–165 (HKLLYPAWFPYDVQA) lie on the Extracellular side of the membrane. A helical transmembrane segment spans residues 166–186 (TELIFWLSVTYQIAGVSLAIL). Residues 187–256 (QNLANDSYPP…LLRSTMNISQ (70 aa)) lie on the Cytoplasmic side of the membrane. Residues 257-277 (LGQFISSGVNISITLVNILFF) form a helical membrane-spanning segment. The Extracellular segment spans residues 278-281 (ADNN). A helical membrane pass occupies residues 282–302 (FAITYYGVYFLSMVLELFPCC). Topologically, residues 303 to 355 (YYGTLISVEMNQLTYAIYSSNWMSMNRSYSRILLIFMQLTLAEVQIKAGGMIG) are cytoplasmic. The helical transmembrane segment at 356-376 (IGMNAFFATVRLAYSFFTLAM) threads the bilayer. Residues 377–379 (SLR) lie on the Extracellular side of the membrane.

The protein belongs to the insect chemoreceptor superfamily. Heteromeric odorant receptor channel (TC 1.A.69) family. Or2a subfamily. As to quaternary structure, interacts with Orco. Complexes exist early in the endomembrane system in olfactory sensory neurons (OSNs), coupling these complexes to the conserved ciliary trafficking pathway. Expressed in 15 cells in the antenna but not the maxillary palp.

The protein localises to the cell membrane. Its function is as follows. Odorant receptor which mediates acceptance or avoidance behavior, depending on its substrates. The odorant receptor repertoire encodes a large collection of odor stimuli that vary widely in identity, intensity, and duration. May form a complex with Orco to form odorant-sensing units, providing sensitive and prolonged odorant signaling and calcium permeability. Involved in the behavioral responses to pentyl acetate and pyrazines. In Drosophila melanogaster (Fruit fly), this protein is Odorant receptor 33b (Or33b).